The sequence spans 186 residues: ATP synthase subunit b, chloroplastic (186 aa).

The helical transmembrane segment at 27–49 (LATNPINLSVVLGVLIFFGKGVL) threads the bilayer.

Belongs to the ATPase B chain family. In terms of assembly, F-type ATPases have 2 components, F(1) - the catalytic core - and F(0) - the membrane proton channel. F(1) has five subunits: alpha(3), beta(3), gamma(1), delta(1), epsilon(1). F(0) has four main subunits: a(1), b(1), b'(1) and c(10-14). The alpha and beta chains form an alternating ring which encloses part of the gamma chain. F(1) is attached to F(0) by a central stalk formed by the gamma and epsilon chains, while a peripheral stalk is formed by the delta, b and b' chains.

The protein localises to the plastid. It localises to the chloroplast thylakoid membrane. In terms of biological role, f(1)F(0) ATP synthase produces ATP from ADP in the presence of a proton or sodium gradient. F-type ATPases consist of two structural domains, F(1) containing the extramembraneous catalytic core and F(0) containing the membrane proton channel, linked together by a central stalk and a peripheral stalk. During catalysis, ATP synthesis in the catalytic domain of F(1) is coupled via a rotary mechanism of the central stalk subunits to proton translocation. Component of the F(0) channel, it forms part of the peripheral stalk, linking F(1) to F(0). This chain is ATP synthase subunit b, chloroplastic, found in Illicium oligandrum (Star anise).